The primary structure comprises 308 residues: Glycerol-3-phosphate dehydrogenase [NAD(P)+] (308 aa).

Residues Trp-15, Arg-35, Arg-36, and Lys-83 each coordinate NADPH. Sn-glycerol 3-phosphate is bound by residues Lys-83 and Gly-111. Ser-115 serves as a coordination point for NADPH. Sn-glycerol 3-phosphate is bound by residues Lys-166, Asp-219, Ser-229, Arg-230, and Asn-231. Lys-166 serves as the catalytic Proton acceptor. Arg-230 serves as a coordination point for NADPH. Glu-256 provides a ligand contact to NADPH.

The protein belongs to the NAD-dependent glycerol-3-phosphate dehydrogenase family.

Its subcellular location is the cytoplasm. The catalysed reaction is sn-glycerol 3-phosphate + NAD(+) = dihydroxyacetone phosphate + NADH + H(+). It catalyses the reaction sn-glycerol 3-phosphate + NADP(+) = dihydroxyacetone phosphate + NADPH + H(+). Its pathway is membrane lipid metabolism; glycerophospholipid metabolism. In terms of biological role, catalyzes the reduction of the glycolytic intermediate dihydroxyacetone phosphate (DHAP) to sn-glycerol 3-phosphate (G3P), the key precursor for phospholipid synthesis. This is Glycerol-3-phosphate dehydrogenase [NAD(P)+] from Synechococcus elongatus (strain ATCC 33912 / PCC 7942 / FACHB-805) (Anacystis nidulans R2).